Here is a 274-residue protein sequence, read N- to C-terminus: tRNA uridine(34) hydroxylase (274 aa).

Positions 121–217 (SRSDVYTIDT…YFKSTKNTNN (97 aa)) constitute a Rhodanese domain. Cys-177 functions as the Cysteine persulfide intermediate in the catalytic mechanism.

The protein belongs to the TrhO family.

The enzyme catalyses uridine(34) in tRNA + AH2 + O2 = 5-hydroxyuridine(34) in tRNA + A + H2O. Catalyzes oxygen-dependent 5-hydroxyuridine (ho5U) modification at position 34 in tRNAs. This chain is tRNA uridine(34) hydroxylase, found in Ehrlichia canis (strain Jake).